A 311-amino-acid chain; its full sequence is Systemic RNA interference defective protein 2 (311 aa).

An N-terminal signal peptide occupies residues 1 to 20 (MPRFVYFCFALIALLPISWT). Topologically, residues 21–188 (MDGILITDVE…EETKTVVNKN (168 aa)) are extracellular. Residues 189 to 209 (GGAVAVAVIEGIALIAILAFL) form a helical membrane-spanning segment. The Cytoplasmic segment spans residues 210 to 311 (GYRTMVNHKL…NDPFATLESW (102 aa)). Positions 287–301 (NSSAAQPSTTSNGQF) are enriched in polar residues. A disordered region spans residues 287-311 (NSSAAQPSTTSNGQFNDPFATLESW).

In terms of tissue distribution, expressed in the intestinal lumen. Also present, at lower levels, in the excretory duct cells.

It localises to the apical cell membrane. The protein resides in the cytoplasm. Its function is as follows. Plays a role in RNA-mediated gene silencing by mediating endocytic uptake of double-stranded RNA (dsRNA) ingested from the environment into intestinal cells from the intestinal lumen. Selective for dsRNAs of at least 50 bp. Required for avoidance behavior induced by small RNAs derived from pathogenic bacteria such as P.aeruginosa. The protein is Systemic RNA interference defective protein 2 of Caenorhabditis elegans.